The following is a 347-amino-acid chain: Sensor protein VraS (347 aa).

Transmembrane regions (helical) follow at residues I13–I33 and I43–V63. Positions R150–K341 constitute a Histidine kinase domain. A Phosphohistidine modification is found at H156.

In terms of processing, autophosphorylated on His-156.

Its subcellular location is the cell membrane. The enzyme catalyses ATP + protein L-histidine = ADP + protein N-phospho-L-histidine.. In terms of biological role, member of the two-component regulatory system PprA/PprB involved in biofilm formation by controlling the expression of many related genes including type IVb pili major subunit flp pilin, adhesin bapA or cupE fimbriae. Also modulates quorum-sensing signal production acting on both negative and positive modulators. Functions as a heme sensor histidine kinase which is autophosphorylated at a histidine residue and transfers its phosphate group to PprB. This Staphylococcus aureus (strain COL) protein is Sensor protein VraS (vraS).